We begin with the raw amino-acid sequence, 83 residues long: Large ribosomal subunit protein eL43 (83 aa).

Residues Cys-38, Cys-41, Cys-56, and Cys-59 each contribute to the Zn(2+) site. The C4-type zinc-finger motif lies at 38–59 (CKKCGKKAVKRSGTGIWECRHC).

The protein belongs to the eukaryotic ribosomal protein eL43 family. Putative zinc-binding subfamily. As to quaternary structure, part of the 50S ribosomal subunit. It depends on Zn(2+) as a cofactor.

Its function is as follows. Binds to the 23S rRNA. The protein is Large ribosomal subunit protein eL43 of Archaeoglobus fulgidus (strain ATCC 49558 / DSM 4304 / JCM 9628 / NBRC 100126 / VC-16).